The sequence spans 162 residues: Nascent polypeptide-associated complex subunit beta (162 aa).

Disordered stretches follow at residues 1 to 39 and 130 to 162; these read MPVD…NISE and EQAK…DNVE. Basic residues predominate over residues 24–33; that stretch reads TPRRPGKKVA. The NAC-A/B domain maps to 38 to 103; sequence SEDEKKLSAT…SQQKDIAELI (66 aa). Positions 146–162 are enriched in acidic residues; sequence GDDEIPNLVENFEDNVE.

This sequence belongs to the NAC-beta family. Part of the nascent polypeptide-associated complex (NAC), consisting of EGD2 and EGD1. NAC associates with ribosomes via EGD1.

Its subcellular location is the cytoplasm. The protein resides in the nucleus. Its function is as follows. Component of the nascent polypeptide-associated complex (NAC), a dynamic component of the ribosomal exit tunnel, protecting the emerging polypeptides from interaction with other cytoplasmic proteins to ensure appropriate nascent protein targeting. The NAC complex also promotes mitochondrial protein import by enhancing productive ribosome interactions with the outer mitochondrial membrane and blocks the inappropriate interaction of ribosomes translating non-secretory nascent polypeptides with translocation sites in the membrane of the endoplasmic reticulum. EGD1 may act as a transcription factor that exert a negative effect on the expression of several genes that are transcribed by RNA polymerase II. This is Nascent polypeptide-associated complex subunit beta (EGD1) from Yarrowia lipolytica (strain CLIB 122 / E 150) (Yeast).